The following is a 447-amino-acid chain: Transcription factor azf1 (447 aa).

Disordered regions lie at residues 125 to 155 and 174 to 199; these read HNGASQQPPGAQSSSNEEGAQGKSSSSNEVE and QSPGVQSLPPLQQLTHGGSNGYPQSY. Positions 127 to 139 are enriched in low complexity; the sequence is GASQQPPGAQSSS. The segment covering 140–155 has biased composition (polar residues); it reads NEEGAQGKSSSSNEVE. C2H2-type zinc fingers lie at residues 225–249, 255–279, 285–307, and 313–338; these read YACTLPQCGKSFAQKTHLDIHMRAH, FVCKEPSCGQRFSQLGNLKTHQRRH, FSCDICQKRFAQRGNVRAHKITH, and FTCLLDDCGKQFTQLGNLKSHQNKFH. The segment at 377–447 is disordered; sequence NKGIKGRGKD…EPYFIERQAH (71 aa). Over residues 397-416 the composition is skewed to basic and acidic residues; it reads PGSESRRRIEPLSSTDDKMR. Residues 421–431 are compositionally biased toward polar residues; sequence GDTSMYNGGSS.

Its subcellular location is the nucleus. Transcription factor that acts as a positive regulator of ochratoxin A (OTA) biosynthesis via controlling the expression of antioxidant genes and oxidative phosphorylation genes. The polypeptide is Transcription factor azf1 (Aspergillus niger (strain ATCC MYA-4892 / CBS 513.88 / FGSC A1513)).